Reading from the N-terminus, the 280-residue chain is MTVVTPVAVAQPNGSDILVGSGQPLLLIGGPCSLESEQLGREVAETVSKICKKLGISYVFKASFDKANRTSISSYRGPGLKKGLASLARIREDLQVPVISDIHDISQVGPAAEVLDIIQIPAFLCRQTDLLVAAAKSGKPVNVKKGQFVSPWDMENAIGKLRDAGSDKVMLVERGACFGYNNLVVDMRSLPVMRSFNCPVIYDATHSVQLPGGAGGSSSGQREFIEPLSKAAIAAGIDGLFMEIHPDPDKALCDGPNSIALDQVEELLTKLVKVRAAVEE.

This sequence belongs to the KdsA family.

It is found in the cytoplasm. The catalysed reaction is D-arabinose 5-phosphate + phosphoenolpyruvate + H2O = 3-deoxy-alpha-D-manno-2-octulosonate-8-phosphate + phosphate. It functions in the pathway carbohydrate biosynthesis; 3-deoxy-D-manno-octulosonate biosynthesis; 3-deoxy-D-manno-octulosonate from D-ribulose 5-phosphate: step 2/3. The protein operates within bacterial outer membrane biogenesis; lipopolysaccharide biosynthesis. The protein is 2-dehydro-3-deoxyphosphooctonate aldolase of Desulfotalea psychrophila (strain LSv54 / DSM 12343).